Reading from the N-terminus, the 183-residue chain is Large ribosomal subunit protein uL6 (183 aa).

Belongs to the universal ribosomal protein uL6 family. In terms of assembly, part of the 50S ribosomal subunit.

Its function is as follows. This protein binds to the 23S rRNA, and is important in its secondary structure. It is located near the subunit interface in the base of the L7/L12 stalk, and near the tRNA binding site of the peptidyltransferase center. The chain is Large ribosomal subunit protein uL6 from Chlamydia pneumoniae (Chlamydophila pneumoniae).